The chain runs to 1869 residues: Chitin synthase 6 (1869 aa).

Residues 1–23 (MAMNLPPLAGSGGAHTQPSLPAL) are disordered. One can recognise a Myosin motor domain in the interval 1-778 (MAMNLPPLAG…EIAHLSEASL (778 aa)). 104-111 (GESGSGKS) serves as a coordination point for ATP. 4 N-linked (GlcNAc...) asparagine glycosylation sites follow: N123, N417, N426, and N557. Disordered regions lie at residues 593–612 (KPMR…ARNQ) and 620–640 (AEEE…AAKA). Low complexity predominate over residues 629–640 (ENNSQAGGAAKA). N630 and N657 each carry an N-linked (GlcNAc...) asparagine glycan. An actin-binding region spans residues 655 to 679 (LDNVTKAVADPSTNSYFVFCLKPND). 2 helical membrane-spanning segments follow: residues 886–906 (WLFM…RFIG) and 925–945 (LIIW…PMLI). The Cytochrome b5 heme-binding domain occupies 949–1010 (QHVYSAAELS…YAGKDATSLF (62 aa)). N-linked (GlcNAc...) asparagine glycosylation is found at N1037, N1062, and N1165. Residues 1201–1221 (LVLAISIMLVTIIAFKFFAAL) traverse the membrane as a helical segment. N1458 and N1564 each carry an N-linked (GlcNAc...) asparagine glycan. 3 consecutive transmembrane segments (helical) span residues 1596–1616 (LSTV…VMVI), 1622–1642 (VPVT…IIFI), and 1649–1669 (MIGW…GLPL). N-linked (GlcNAc...) asparagine glycosylation occurs at N1778. Residues 1811-1866 (LPSDDALLAEIREILRTADLMTVTKKGIKQELERRFGVPLDAKRAYINSATEALLS) enclose the DEK-C domain.

The protein in the N-terminal section; belongs to the TRAFAC class myosin-kinesin ATPase superfamily. Myosin family. This sequence in the C-terminal section; belongs to the chitin synthase family. Class V subfamily.

The protein localises to the cell membrane. The catalysed reaction is [(1-&gt;4)-N-acetyl-beta-D-glucosaminyl](n) + UDP-N-acetyl-alpha-D-glucosamine = [(1-&gt;4)-N-acetyl-beta-D-glucosaminyl](n+1) + UDP + H(+). In terms of biological role, polymerizes chitin, a structural polymer of the cell wall and septum, by transferring the sugar moiety of UDP-GlcNAc to the non-reducing end of the growing chitin polymer. Plays a role in cell wall integrity and is involved in tolerance to hyperosmotic conditions. Required to successfully penetrate the host plants and thus plays a key role in pathogenicity. This Verticillium dahliae (strain VdLs.17 / ATCC MYA-4575 / FGSC 10137) (Verticillium wilt) protein is Chitin synthase 6.